The sequence spans 213 residues: Succinate dehydrogenase subunit 3-1, mitochondrial (213 aa).

The N-terminal 105 residues, 1–105 (MAATALFRSI…LDVGTSKRLF (105 aa)), are a transit peptide targeting the mitochondrion. H130 lines the heme pocket. The helical transmembrane segment at 148–165 (ISGVYLTGVTFAGYLLYL) threads the bilayer.

Component of complex II composed of eight subunits in plants: four classical SDH subunits SDH1, SDH2, SDH3 and SDH4 (a flavoprotein (FP), an iron-sulfur protein (IP), and a cytochrome b composed of a large and a small subunit.), as well as four subunits unknown in mitochondria from bacteria and heterotrophic eukaryotes. Heme is required as a cofactor. Expressed in flowers, inflorescences and stems.

The protein localises to the mitochondrion inner membrane. It participates in carbohydrate metabolism; tricarboxylic acid cycle. In terms of biological role, membrane-anchoring subunit of succinate dehydrogenase (SDH). This is Succinate dehydrogenase subunit 3-1, mitochondrial from Arabidopsis thaliana (Mouse-ear cress).